Reading from the N-terminus, the 353-residue chain is MAEKVNVCIVGSGNWGSAIAKIVGANAAALPEFEERVTMFVYEEMIDGKKLTEIINETHENVKYLKGHKLPTNVVAVPDLVEAAKNADILIFVVPHQFIPNFCKQLLGKIKPNAIAISLIKGFDKAEGGGIDLISHIITRHLKIPCAVLMGANLANEVAEGNFCETTIGCTDKKYGKVLRDLFQANHFRVVVVEDADAVEVCGALKNIVACGAGFVDGLKLGDNTKAAVIRLGLMEMIRFVDVFYPGSKLSTFFESCGVADLITTCYGGRNRRVSEAFVTSGKTIEDLEKEMLNGQKLQGPPTAEEVNYMLKNKGLEDKFPLFTAIHKICTNQLKPKDLIDCIRNHPEHMQTL.

A Blocked amino end (Ala) modification is found at alanine 2. NAD(+) is bound by residues glycine 11–glycine 16, phenylalanine 98, lysine 121, and alanine 155. A substrate-binding site is contributed by lysine 121. Lysine 206 serves as the catalytic Proton acceptor. Residues arginine 270 and glutamine 299 each contribute to the NAD(+) site. Arginine 270–asparagine 271 serves as a coordination point for substrate.

The protein belongs to the NAD-dependent glycerol-3-phosphate dehydrogenase family. As to quaternary structure, homodimer.

It is found in the cytoplasm. It carries out the reaction sn-glycerol 3-phosphate + NAD(+) = dihydroxyacetone phosphate + NADH + H(+). It functions in the pathway phospholipid metabolism; alpha-glycerophosphate cycle. This Drosophila virilis (Fruit fly) protein is Glycerol-3-phosphate dehydrogenase [NAD(+)], cytoplasmic.